Here is a 325-residue protein sequence, read N- to C-terminus: NADH-quinone oxidoreductase subunit H (325 aa).

A run of 8 helical transmembrane segments spans residues 11 to 31 (VIIAVVKALVILFVVVGCGAF), 81 to 101 (VIFTLAPMIAFTSLLLAMAIV), 114 to 134 (IGLLFFLMMAGLAVYAVLFAG), 154 to 174 (LSYEVFLGLSLMGVVAQAGSF), 186 to 206 (LWNVIPQFLGFLTFCIAGVAV), 237 to 257 (FFVGEYVGIVTVSALIVTLFF), 265 to 285 (LPPVIWFALKTAFFMMMFILI), and 304 to 324 (VCLPLTLLNLLATAAVILYTA).

This sequence belongs to the complex I subunit 1 family. As to quaternary structure, NDH-1 is composed of 13 different subunits. Subunits NuoA, H, J, K, L, M, N constitute the membrane sector of the complex.

The protein resides in the cell inner membrane. It carries out the reaction a quinone + NADH + 5 H(+)(in) = a quinol + NAD(+) + 4 H(+)(out). NDH-1 shuttles electrons from NADH, via FMN and iron-sulfur (Fe-S) centers, to quinones in the respiratory chain. The immediate electron acceptor for the enzyme in this species is believed to be ubiquinone. Couples the redox reaction to proton translocation (for every two electrons transferred, four hydrogen ions are translocated across the cytoplasmic membrane), and thus conserves the redox energy in a proton gradient. This subunit may bind ubiquinone. The polypeptide is NADH-quinone oxidoreductase subunit H (Erwinia tasmaniensis (strain DSM 17950 / CFBP 7177 / CIP 109463 / NCPPB 4357 / Et1/99)).